The sequence spans 360 residues: Peptide chain release factor 1 (360 aa).

An N5-methylglutamine modification is found at glutamine 235. The segment covering 285–295 (AQQASEASTRK) has biased composition (polar residues). Residues 285 to 305 (AQQASEASTRKSLIGSGDRSD) are disordered.

This sequence belongs to the prokaryotic/mitochondrial release factor family. Post-translationally, methylated by PrmC. Methylation increases the termination efficiency of RF1.

Its subcellular location is the cytoplasm. Peptide chain release factor 1 directs the termination of translation in response to the peptide chain termination codons UAG and UAA. This chain is Peptide chain release factor 1, found in Thiobacillus denitrificans (strain ATCC 25259 / T1).